The primary structure comprises 850 residues: Trimethylguanosine synthase (850 aa).

The segment at Asn-54–Pro-85 is disordered. The residue at position 61 (Thr-61) is a Phosphothreonine. Residues Ser-92 and Ser-152 each carry the phosphoserine modification. Disordered regions lie at residues Asp-278 to His-311, Glu-327 to Pro-454, and Ile-523 to Cys-566. Positions Thr-363–Ser-374 are enriched in basic and acidic residues. Over residues Ser-375–Thr-390 the composition is skewed to polar residues. Phosphoserine is present on residues Ser-405 and Ser-431. Acidic residues predominate over residues Asp-424 to Asp-435. Residues Ser-548–Glu-562 are compositionally biased toward basic and acidic residues. Ser-571 bears the Phosphoserine mark. The tract at residues Thr-595 to Leu-628 is disordered. The segment covering Lys-611–Lys-624 has biased composition (basic residues). Asp-713 is a binding site for S-adenosyl-L-methionine.

Belongs to the methyltransferase superfamily. Trimethylguanosine synthase family. As to quaternary structure, may form homooligomers. Interacts with CREBBP/CBP, EED/WAIT1, EP300/P300, NCOA6/PRIP, PPARBP/PBP and SMN. In terms of tissue distribution, a 55 kDa isoform is widely expressed while a 90 kDa isoform is detected exclusively in brain and testis (at protein level).

The protein resides in the cytoplasm. Its subcellular location is the nucleus. It localises to the cajal body. It is found in the nucleolus. The catalysed reaction is a 5'-end (N(7)-methyl 5'-triphosphoguanosine)-ribonucleoside in snRNA + S-adenosyl-L-methionine = a 5'-end (N(2),N(7)-dimethyl 5'-triphosphoguanosine)-ribonucleoside in snRNA + S-adenosyl-L-homocysteine + H(+). It catalyses the reaction a 5'-end (N(7)-methyl 5'-triphosphoguanosine)-ribonucleoside in snoRNA + S-adenosyl-L-methionine = a 5'-end (N(2),N(7)-dimethyl 5'-triphosphoguanosine)-ribonucleoside in snoRNA + S-adenosyl-L-homocysteine + H(+). It carries out the reaction a 5'-end (N(2),N(7)-dimethyl 5'-triphosphoguanosine)-ribonucleoside in snRNA + S-adenosyl-L-methionine = a 5'-end (N(2),N(2),N(7)-trimethyl 5'-triphosphoguanosine)-ribonucleoside in snRNA + S-adenosyl-L-homocysteine + H(+). The enzyme catalyses a 5'-end (N(2),N(7)-dimethyl 5'-triphosphoguanosine)-ribonucleoside in snoRNA + S-adenosyl-L-methionine = a 5'-end (N(2),N(2),N(7)-trimethyl 5'-triphosphoguanosine)-ribonucleoside in snoRNA + S-adenosyl-L-homocysteine + H(+). Catalyzes the 2 serial methylation steps for the conversion of the 7-monomethylguanosine (m(7)G) caps of snRNAs and snoRNAs to a 2,2,7-trimethylguanosine (m(2,2,7)G) cap structure. The enzyme is specific for guanine, and N7 methylation must precede N2 methylation. Hypermethylation of the m7G cap of U snRNAs leads to their concentration in nuclear foci, their colocalization with coilin and the formation of canonical Cajal bodies (CBs). Plays a role in transcriptional regulation. This is Trimethylguanosine synthase from Rattus norvegicus (Rat).